We begin with the raw amino-acid sequence, 217 residues long: Adenylate kinase (217 aa).

Residue 10–15 coordinates ATP; the sequence is GAGKGT. Positions 30–59 are NMP; that stretch reads STGDMFRAAMKNETELGLKAKSYMDAGELV. AMP is bound by residues Thr31, Arg36, 57-59, 85-88, and Gln92; these read ELV and GFPR. An LID region spans residues 126–163; that stretch reads GRRVSPTSGRTYHVIFNPPKVEGICDVDGSELIQRDDD. Residues Arg127 and 136-137 each bind ATP; that span reads TY. Residues Arg160 and Arg171 each contribute to the AMP site. ATP is bound at residue Gln199.

It belongs to the adenylate kinase family. Monomer.

It localises to the cytoplasm. It carries out the reaction AMP + ATP = 2 ADP. The protein operates within purine metabolism; AMP biosynthesis via salvage pathway; AMP from ADP: step 1/1. In terms of biological role, catalyzes the reversible transfer of the terminal phosphate group between ATP and AMP. Plays an important role in cellular energy homeostasis and in adenine nucleotide metabolism. This is Adenylate kinase from Halalkalibacterium halodurans (strain ATCC BAA-125 / DSM 18197 / FERM 7344 / JCM 9153 / C-125) (Bacillus halodurans).